We begin with the raw amino-acid sequence, 453 residues long: Serine/threonine-protein phosphatase 2A 55 kDa regulatory subunit B delta isoform (453 aa).

4 WD repeats span residues 32–71, 97–138, 181–219, and 230–270; these read AEADIISTVEFNYSGDLLATGDKGGRVVIFQREQENKGRA, EIEE…KRAE, AHTYHINSISVNSDHETYLSADDLRINLWHLEITDRSFN, and ELTE…LCDR. The residue at position 285 (Ser285) is a Phosphoserine. WD repeat units follow at residues 289–327, 344–385, and 420–452; these read EIISSISDVKFSHSGRYMMTRDYLSVKVWDLNMEGRPVE, ENDC…DVTL, and DFNKKILHTAWHPMESIIAVAATNNLYIFQDKI. At Tyr305 the chain carries Phosphotyrosine. Thr308 carries the phosphothreonine modification.

This sequence belongs to the phosphatase 2A regulatory subunit B family. PP2A consists of a common heterodimeric core enzyme, composed of a 36 kDa catalytic subunit (subunit C) and a 65 kDa constant regulatory subunit (PR65 or subunit A), that associates with a variety of regulatory subunits. Proteins that associate with the core dimer include three families of regulatory subunits B (the R2/B/PR55/B55, R3/B''/PR72/PR130/PR59 and R5/B'/B56 families), the 48 kDa variable regulatory subunit, viral proteins, and cell signaling molecules. Interacts with IER5.

The protein resides in the cytoplasm. Its function is as follows. Substrate-recognition subunit of protein phosphatase 2A (PP2A) that plays a key role in cell cycle by controlling mitosis entry and exit. Involved in chromosome clustering during late mitosis by mediating dephosphorylation of MKI67. The activity of PP2A complexes containing PPP2R2D (PR55-delta) fluctuate during the cell cycle: the activity is high in interphase and low in mitosis. This chain is Serine/threonine-protein phosphatase 2A 55 kDa regulatory subunit B delta isoform, found in Mus musculus (Mouse).